The chain runs to 257 residues: Pyridoxal phosphate homeostasis protein (257 aa).

Position 47 is an N6-(pyridoxal phosphate)lysine (lysine 47).

Belongs to the pyridoxal phosphate-binding protein YggS/PROSC family.

Its function is as follows. Pyridoxal 5'-phosphate (PLP)-binding protein, which is involved in PLP homeostasis. This is Pyridoxal phosphate homeostasis protein from Mycobacterium leprae (strain TN).